A 173-amino-acid chain; its full sequence is Adenine phosphoribosyltransferase (173 aa).

This sequence belongs to the purine/pyrimidine phosphoribosyltransferase family. Homodimer.

The protein resides in the cytoplasm. The enzyme catalyses AMP + diphosphate = 5-phospho-alpha-D-ribose 1-diphosphate + adenine. It functions in the pathway purine metabolism; AMP biosynthesis via salvage pathway; AMP from adenine: step 1/1. In terms of biological role, catalyzes a salvage reaction resulting in the formation of AMP, that is energically less costly than de novo synthesis. This is Adenine phosphoribosyltransferase from Desulfitobacterium hafniense (strain Y51).